The primary structure comprises 188 residues: Elongation factor P (188 aa).

Position 34 is an N6-(3,6-diaminohexanoyl)-5-hydroxylysine (lysine 34).

This sequence belongs to the elongation factor P family. Post-translationally, may be beta-lysylated on the epsilon-amino group of Lys-34 by the combined action of EpmA and EpmB, and then hydroxylated on the C5 position of the same residue by EpmC (if this protein is present). Lysylation is critical for the stimulatory effect of EF-P on peptide-bond formation. The lysylation moiety may extend toward the peptidyltransferase center and stabilize the terminal 3-CCA end of the tRNA. Hydroxylation of the C5 position on Lys-34 may allow additional potential stabilizing hydrogen-bond interactions with the P-tRNA.

Its subcellular location is the cytoplasm. Its pathway is protein biosynthesis; polypeptide chain elongation. In terms of biological role, involved in peptide bond synthesis. Alleviates ribosome stalling that occurs when 3 or more consecutive Pro residues or the sequence PPG is present in a protein, possibly by augmenting the peptidyl transferase activity of the ribosome. Modification of Lys-34 is required for alleviation. The sequence is that of Elongation factor P from Cronobacter sakazakii (strain ATCC BAA-894) (Enterobacter sakazakii).